A 236-amino-acid chain; its full sequence is Lipoarabinomannan carrier protein LprG (236 aa).

Residues 1 to 26 (MRTPRRHCRRIAVLAAVSIAATVVAG) form the signal peptide. Cysteine 27 carries the N-palmitoyl cysteine lipid modification. The S-diacylglycerol cysteine moiety is linked to residue cysteine 27.

It belongs to the LppX/LprAFG lipoprotein family. Post-translationally, modified by Lgt on Cys-27 with an S-linked diacylglyceral, signal peptide is removed by LspA, Cys-27 is further modifed with a fatty acid on its amino group by Lnt yielding a triacylated protein.

It localises to the cell inner membrane. The protein localises to the secreted. The protein resides in the cell wall. Functionally, helps membrane protein Mb1445c (P55) transport triacylglycerides (TAG) across the inner cell membrane into the periplasm and probably ultimately to the outer membrane. Binds TAG in its hydrophobic cavity and transfers it between lipid bilayers. TAG probably regulates lipid metabolism and growth regulation and plays a structural role in the outer membrane. Binds di- and triacylated phosphatidyl-myo-inositol mannosides (PIMs), and glycolipid lipoglycan modulins lipoarabinomannan (LAM) and lipomannan (LM), facilitating their recognition by TLR2. Required for activity of drug efflux transporter Mb1445c. Required, probably with Mb1445c, for normal surface localization of LAM. In terms of biological role, constitutes a host TLR2 agonist (toll-like receptor). The chain is Lipoarabinomannan carrier protein LprG from Mycobacterium bovis (strain ATCC BAA-935 / AF2122/97).